A 449-amino-acid polypeptide reads, in one-letter code: Sensor protein QseC (449 aa).

The Cytoplasmic segment spans residues 1-12; sequence MKLTQRLSLRVR. The chain crosses the membrane as a helical span at residues 13-33; the sequence is LTLIFLILVSITWAISSFVAW. The Periplasmic portion of the chain corresponds to 34-161; that stretch reads RKTTDNVDEL…REDMALAIVA (128 aa). A helical transmembrane segment spans residues 162 to 182; sequence AQLTPWLIALPFMLLILLLLL. The HAMP domain maps to 183–235; sequence HRELRPLKKLAQALRFRSPESETPLDAKGVPSEVRPLVEALNQLFSRIHSMMV. The Cytoplasmic segment spans residues 183-449; that stretch reads HRELRPLKKL…EGGFEAVVRW (267 aa). The Histidine kinase domain occupies 243–449; the sequence is DAAHELRSPL…EGGFEAVVRW (207 aa). Phosphohistidine; by autocatalysis is present on His-246.

It localises to the cell inner membrane. It catalyses the reaction ATP + protein L-histidine = ADP + protein N-phospho-L-histidine.. Member of a two-component regulatory system QseB/QseC. Activates the flagella regulon by activating transcription of FlhDC. May activate QseB by phosphorylation. The sequence is that of Sensor protein QseC (qseC) from Salmonella typhi.